A 142-amino-acid chain; its full sequence is 3-hydroxyacyl-[acyl-carrier-protein] dehydratase FabZ (142 aa).

Residue His-48 is part of the active site.

This sequence belongs to the thioester dehydratase family. FabZ subfamily.

The protein localises to the cytoplasm. It catalyses the reaction a (3R)-hydroxyacyl-[ACP] = a (2E)-enoyl-[ACP] + H2O. In terms of biological role, involved in unsaturated fatty acids biosynthesis. Catalyzes the dehydration of short chain beta-hydroxyacyl-ACPs and long chain saturated and unsaturated beta-hydroxyacyl-ACPs. This Clostridioides difficile (strain 630) (Peptoclostridium difficile) protein is 3-hydroxyacyl-[acyl-carrier-protein] dehydratase FabZ.